The sequence spans 325 residues: ATPase GET3 (325 aa).

34 to 41 (KGGVGKTT) is a binding site for ATP. D63 is a catalytic residue. Residues E243 and N270 each coordinate ATP. Zn(2+)-binding residues include C281 and C284.

Belongs to the arsA ATPase family. Homodimer.

It is found in the cytoplasm. The protein localises to the endoplasmic reticulum. ATPase required for the post-translational delivery of tail-anchored (TA) proteins to the endoplasmic reticulum. Recognizes and selectively binds the transmembrane domain of TA proteins in the cytosol. This complex then targets to the endoplasmic reticulum by membrane-bound receptors, where the tail-anchored protein is released for insertion. This process is regulated by ATP binding and hydrolysis. ATP binding drives the homodimer towards the closed dimer state, facilitating recognition of newly synthesized TA membrane proteins. ATP hydrolysis is required for insertion. Subsequently, the homodimer reverts towards the open dimer state, lowering its affinity for the membrane-bound receptor, and returning it to the cytosol to initiate a new round of targeting. The sequence is that of ATPase GET3 from Coccidioides posadasii (strain C735) (Valley fever fungus).